We begin with the raw amino-acid sequence, 651 residues long: MSAASLYPVHPEAVARTFTDEATYKTMYQQSVVNPDGFWREQAQRIDWIKPFEKVKQTSFDDHHVDIKWFADGTLNVSHNCLDRHLAERGDQVAIIWEGDDPADHQEITYRQLHEQVCKFANALRGQDVHRGDVVTIYMPMIPEAVVAMLACTRIGAIHSVVFGGFSPEALAGRIIDCKSKVVITADEGVRGGKRTPLKANVDDALTNPETSSVQKIIVCKRTGAEIKWNQHRDVWYDDLMKVAGSTCAPKEMGAEDPLFILYTSGSTGKPKGVLHTTGGYLVYASLTHERVFDYRPGEVYWCTADIGWVTGHTYIVYGPLANGATTILFEGVPNYPDVTRVAKIIDKHKVNILYTAPTAIRAMMAEGKAAVAGADGSSLRLLGSVGEPINPEAWQWYYETVGQSRCPIVDTWWQTETGACLMTPLPGAHAMKPGSAAKPFFGVVPALVDNLGNLIEGAAEGNLVILDSWPGQARTLFGDHDRFVDTYFKTFKGMYFTGDGARRDEDGYYWITGRVDDVLNVSGHRMGTAEVESAMVAHPKVAEAAVVGMQHDIKGQGIYVYVTLNSGVEPSEALRQELKQWVRREIGPIATPDVIQWAPGLPKTRSGKIMRRILRKIAAAEYDTLGDISTLADPGVVQHLIETHRSMQAA.

CoA is bound by residues 191–194, T311, and N335; that span reads RGGK. ATP is bound by residues 387–389, 411–416, D500, and R515; these read GEP and DTWWQT. S523 is a CoA binding site. R526 provides a ligand contact to ATP. Positions 537, 539, and 542 each coordinate Mg(2+). R584 contacts CoA. K609 is subject to N6-acetyllysine.

Belongs to the ATP-dependent AMP-binding enzyme family. Mg(2+) serves as cofactor. Acetylated. Deacetylation by the SIR2-homolog deacetylase activates the enzyme.

The catalysed reaction is acetate + ATP + CoA = acetyl-CoA + AMP + diphosphate. Functionally, catalyzes the conversion of acetate into acetyl-CoA (AcCoA), an essential intermediate at the junction of anabolic and catabolic pathways. AcsA undergoes a two-step reaction. In the first half reaction, AcsA combines acetate with ATP to form acetyl-adenylate (AcAMP) intermediate. In the second half reaction, it can then transfer the acetyl group from AcAMP to the sulfhydryl group of CoA, forming the product AcCoA. The protein is Acetyl-coenzyme A synthetase 1 of Pseudomonas aeruginosa (strain ATCC 15692 / DSM 22644 / CIP 104116 / JCM 14847 / LMG 12228 / 1C / PRS 101 / PAO1).